A 365-amino-acid chain; its full sequence is Phospho-N-acetylmuramoyl-pentapeptide-transferase (365 aa).

The next 10 membrane-spanning stretches (helical) occupy residues 19 to 39 (TLLI…SSWA), 49 to 69 (LLIA…AVVP), 92 to 112 (AGTP…IAVV), 116 to 136 (FNPD…IGWV), 156 to 176 (LFLQ…YGPT), 183 to 203 (IMQF…FALV), 215 to 235 (VDGL…LLVA), 238 to 258 (NPAL…FVHH), 279 to 299 (LAAV…SGIF), and 345 to 365 (QIVG…MATA).

This sequence belongs to the glycosyltransferase 4 family. MraY subfamily. Requires Mg(2+) as cofactor.

The protein localises to the cell inner membrane. It catalyses the reaction UDP-N-acetyl-alpha-D-muramoyl-L-alanyl-gamma-D-glutamyl-meso-2,6-diaminopimeloyl-D-alanyl-D-alanine + di-trans,octa-cis-undecaprenyl phosphate = di-trans,octa-cis-undecaprenyl diphospho-N-acetyl-alpha-D-muramoyl-L-alanyl-D-glutamyl-meso-2,6-diaminopimeloyl-D-alanyl-D-alanine + UMP. Its pathway is cell wall biogenesis; peptidoglycan biosynthesis. Functionally, catalyzes the initial step of the lipid cycle reactions in the biosynthesis of the cell wall peptidoglycan: transfers peptidoglycan precursor phospho-MurNAc-pentapeptide from UDP-MurNAc-pentapeptide onto the lipid carrier undecaprenyl phosphate, yielding undecaprenyl-pyrophosphoryl-MurNAc-pentapeptide, known as lipid I. This chain is Phospho-N-acetylmuramoyl-pentapeptide-transferase, found in Synechocystis sp. (strain ATCC 27184 / PCC 6803 / Kazusa).